Reading from the N-terminus, the 219-residue chain is Pyridoxine/pyridoxamine 5'-phosphate oxidase (219 aa).

Substrate is bound by residues 15–18 (RRDY) and lysine 73. Residues 68 to 73 (RMVLLK), 83 to 84 (YT), arginine 89, lysine 90, and glutamine 112 each bind FMN. The substrate site is built by tyrosine 130, arginine 134, and serine 138. Residues 147–148 (QS) and tryptophan 192 contribute to the FMN site. 198–200 (RLH) is a binding site for substrate. Arginine 202 is an FMN binding site.

Belongs to the pyridoxamine 5'-phosphate oxidase family. Homodimer. FMN is required as a cofactor.

The enzyme catalyses pyridoxamine 5'-phosphate + O2 + H2O = pyridoxal 5'-phosphate + H2O2 + NH4(+). The catalysed reaction is pyridoxine 5'-phosphate + O2 = pyridoxal 5'-phosphate + H2O2. Its pathway is cofactor metabolism; pyridoxal 5'-phosphate salvage; pyridoxal 5'-phosphate from pyridoxamine 5'-phosphate: step 1/1. It participates in cofactor metabolism; pyridoxal 5'-phosphate salvage; pyridoxal 5'-phosphate from pyridoxine 5'-phosphate: step 1/1. Functionally, catalyzes the oxidation of either pyridoxine 5'-phosphate (PNP) or pyridoxamine 5'-phosphate (PMP) into pyridoxal 5'-phosphate (PLP). The sequence is that of Pyridoxine/pyridoxamine 5'-phosphate oxidase from Acaryochloris marina (strain MBIC 11017).